The primary structure comprises 356 residues: Inactive ubiquitin thioesterase OTULINL (356 aa).

Positions 1–22 (MAATRSPTRARERERSGAPAAG) are disordered. A required for membrane binding region spans residues 1 to 83 (MAATRSPTRA…KWWIGYLQRK (83 aa)). The OTU domain maps to 128 to 356 (KCVRQVRRDN…NDRHYHIPVF (229 aa)).

It belongs to the peptidase C65 family. Otulin subfamily. Does not bind ubiquitin or ubiquitin-like proteins.

The protein resides in the cytoplasm. It is found in the endoplasmic reticulum membrane. The protein localises to the nucleus envelope. Its function is as follows. Lacks deubiquitinase activity. In Homo sapiens (Human), this protein is Inactive ubiquitin thioesterase OTULINL.